Consider the following 486-residue polypeptide: UDP-N-acetylmuramate--L-alanine ligase (486 aa).

126-132 contributes to the ATP binding site; that stretch reads GTHGKTS.

This sequence belongs to the MurCDEF family.

It localises to the cytoplasm. The catalysed reaction is UDP-N-acetyl-alpha-D-muramate + L-alanine + ATP = UDP-N-acetyl-alpha-D-muramoyl-L-alanine + ADP + phosphate + H(+). It functions in the pathway cell wall biogenesis; peptidoglycan biosynthesis. Cell wall formation. In Corynebacterium glutamicum (strain ATCC 13032 / DSM 20300 / JCM 1318 / BCRC 11384 / CCUG 27702 / LMG 3730 / NBRC 12168 / NCIMB 10025 / NRRL B-2784 / 534), this protein is UDP-N-acetylmuramate--L-alanine ligase.